The following is a 721-amino-acid chain: WD repeat and coiled-coil-containing protein (721 aa).

Position 1 is an N-acetylmethionine (M1). WD repeat units lie at residues 55-98 (GQFE…MESS) and 154-194 (NTQG…LHRC). Phosphoserine is present on residues S299, S468, S501, and S523. The span at 520 to 537 (QPASLPRHSSTPDHTSTL) shows a compositional bias: polar residues. Residues 520 to 553 (QPASLPRHSSTPDHTSTLEPPRLPQRKNLQSEKE) form a disordered region. A Phosphothreonine modification is found at T530. An interaction with HCK region spans residues 539–545 (PPRLPQR). Residues 556 to 584 (QLSKEVEILSRNLVEMQRCLSELTNRLHN) adopt a coiled-coil conformation. Residues S686 and S690 each carry the phosphoserine modification.

Oligomer. Interacts with HCK (via SH3 domain). Phosphorylated on Tyr when associated with HCK.

In Homo sapiens (Human), this protein is WD repeat and coiled-coil-containing protein.